Consider the following 158-residue polypeptide: Cyclic pyranopterin monophosphate synthase (158 aa).

Residues 75–77 (LCH) and 111–112 (ME) contribute to the substrate site. Residue D126 is part of the active site.

Belongs to the MoaC family. Homohexamer; trimer of dimers.

The enzyme catalyses (8S)-3',8-cyclo-7,8-dihydroguanosine 5'-triphosphate = cyclic pyranopterin phosphate + diphosphate. It participates in cofactor biosynthesis; molybdopterin biosynthesis. Its function is as follows. Catalyzes the conversion of (8S)-3',8-cyclo-7,8-dihydroguanosine 5'-triphosphate to cyclic pyranopterin monophosphate (cPMP). The protein is Cyclic pyranopterin monophosphate synthase of Caulobacter vibrioides (strain ATCC 19089 / CIP 103742 / CB 15) (Caulobacter crescentus).